The chain runs to 410 residues: MKNKGYPLRSSMDELSTKNDNEIDLEKGPLPEYNSEDGSTLPPYSEIWKYIKTVSEDSSTGPTETTNPNVERRQEFKDSHPNIYSLLRLLISVLAVIVVFFTAWVCVNPLEKSIFGKVAFFVTIGITCPILLITIFCFFETWTQAVAQCIKVTVIFLAQCVKVTAVFLAKCIKVTAVFLAKCVKVTAVFLAKCIKVTAVFLAKCVKVTAVFLAKCVKVIAVGLYNSKKDLVVTIWLAWVVICFILFGCVKDGRLNLNKALICSTCSISAALFFILLLVCIPIWTLKHMLFGLFQVLGVQSCVVIVTKGLMYLFDKHIDATGYEIEASSLFVIGNFLFFYEMERPGALKRMPKFIGNGIASFLGGLGNAFGGIGNAFGGIGNAIGRIGNAFRGANDNNDIPLGEMDVESEV.

Residues 1 to 39 (MKNKGYPLRSSMDELSTKNDNEIDLEKGPLPEYNSEDGS) are disordered. The segment covering 11–29 (SMDELSTKNDNEIDLEKGP) has biased composition (basic and acidic residues). 10 helical membrane passes run 89-109 (LLIS…CVNP), 119-139 (AFFV…FCFF), 149-169 (CIKV…VFLA), 174-194 (VTAV…AKCI), 204-224 (CVKV…VGLY), 229-249 (DLVV…FGCV), 265-285 (CSIS…IWTL), 289-309 (LFGL…TKGL), 319-339 (ATGY…LFFY), and 353-373 (FIGN…GGIG).

Belongs to the WTF family. As to quaternary structure, homomer. Forms protein aggregates. The two isoforms can interact with each other and with themselves. High sequence similarity is required for their interaction.

It localises to the spore membrane. Its subcellular location is the vacuole membrane. The protein resides in the ascus epiplasm. It is found in the cytoplasm. The protein localises to the endoplasmic reticulum membrane. Functionally, promotes unequal transmission of alleles from the parental zygote to progeny spores by acting as poison/antidote system where the poison and antidote proteins are produced from the same locus; the poison component is trans-acting and targets all spores within an ascus whereas the antidote component is spore-specific, leading to poisoning of all progeny that do not inherit the allele. Its function is as follows. Localizes isoform 2 to the vacuole thereby facilitating its degradation. In addition to suppressing isoform 2, also suppresses S.pombe strain 972 wtf13 isoform 2. In terms of biological role, forms toxic aggregates that disrupt spore maturation. This is Meiotic driver wtf18 from Schizosaccharomyces pombe (Fission yeast).